Consider the following 247-residue polypeptide: Type III pantothenate kinase (247 aa).

Asp6–Thr13 lines the ATP pocket. Gly101–Arg104 contributes to the substrate binding site. Asp103 serves as the catalytic Proton acceptor. K(+) is bound at residue Asp123. ATP is bound at residue Thr126. A substrate-binding site is contributed by Thr177.

It belongs to the type III pantothenate kinase family. In terms of assembly, homodimer. NH4(+) serves as cofactor. K(+) is required as a cofactor.

It is found in the cytoplasm. The enzyme catalyses (R)-pantothenate + ATP = (R)-4'-phosphopantothenate + ADP + H(+). It functions in the pathway cofactor biosynthesis; coenzyme A biosynthesis; CoA from (R)-pantothenate: step 1/5. Catalyzes the phosphorylation of pantothenate (Pan), the first step in CoA biosynthesis. This Thermosipho melanesiensis (strain DSM 12029 / CIP 104789 / BI429) protein is Type III pantothenate kinase.